A 92-amino-acid polypeptide reads, in one-letter code: Small ribosomal subunit protein uS19 (92 aa).

This sequence belongs to the universal ribosomal protein uS19 family.

Protein S19 forms a complex with S13 that binds strongly to the 16S ribosomal RNA. This chain is Small ribosomal subunit protein uS19, found in Chromobacterium violaceum (strain ATCC 12472 / DSM 30191 / JCM 1249 / CCUG 213 / NBRC 12614 / NCIMB 9131 / NCTC 9757 / MK).